A 138-amino-acid chain; its full sequence is Small ribosomal subunit protein uS11c (138 aa).

Positions 1–21 (MAKSISKIGSRKNARIGSRKQ) are disordered. A compositionally biased stretch (basic residues) spans 9 to 21 (GSRKNARIGSRKQ).

Belongs to the universal ribosomal protein uS11 family. Part of the 30S ribosomal subunit.

It is found in the plastid. The protein localises to the chloroplast. This Cicer arietinum (Chickpea) protein is Small ribosomal subunit protein uS11c.